Reading from the N-terminus, the 229-residue chain is Protein TraJ (229 aa).

It localises to the cytoplasm. Its function is as follows. This protein is essential for positively regulating the expression of transfer genes that are involved in the conjugal transfer of DNA between bacterial cells. The sequence is that of Protein TraJ (traJ) from Escherichia coli (strain K12).